A 57-amino-acid chain; its full sequence is UPF0057 membrane protein T23F2.4 (57 aa).

A run of 2 helical transmembrane segments spans residues 3 to 23 (ITCMDIPKFLFALLLPPVGVF) and 36 to 56 (ILLTILGYIPGIIYACYIILA).

The protein belongs to the UPF0057 (PMP3) family.

The protein localises to the membrane. The sequence is that of UPF0057 membrane protein T23F2.4 from Caenorhabditis elegans.